Reading from the N-terminus, the 367-residue chain is Glutamate 5-kinase (367 aa).

Lysine 8 is a binding site for ATP. Residues serine 49, aspartate 136, and asparagine 148 each contribute to the substrate site. Residues 168 to 169 and 210 to 216 each bind ATP; these read TD and TGGMATK. Positions 275-353 constitute a PUA domain; that stretch reads TGKLLLDAGA…DQIVQILGYE (79 aa).

The protein belongs to the glutamate 5-kinase family.

Its subcellular location is the cytoplasm. It catalyses the reaction L-glutamate + ATP = L-glutamyl 5-phosphate + ADP. It functions in the pathway amino-acid biosynthesis; L-proline biosynthesis; L-glutamate 5-semialdehyde from L-glutamate: step 1/2. Its function is as follows. Catalyzes the transfer of a phosphate group to glutamate to form L-glutamate 5-phosphate. The chain is Glutamate 5-kinase from Synechococcus elongatus (strain ATCC 33912 / PCC 7942 / FACHB-805) (Anacystis nidulans R2).